Consider the following 282-residue polypeptide: Putative hydrolase Bamb_4846 (282 aa).

Mg(2+)-binding residues include Glu124, Glu126, and Asp155.

This sequence belongs to the FAH family. Requires Mg(2+) as cofactor.

This Burkholderia ambifaria (strain ATCC BAA-244 / DSM 16087 / CCUG 44356 / LMG 19182 / AMMD) (Burkholderia cepacia (strain AMMD)) protein is Putative hydrolase Bamb_4846.